Consider the following 196-residue polypeptide: Peptide deformylase (196 aa).

Residues C123 and H166 each coordinate Fe cation. Residue E167 is part of the active site. H170 provides a ligand contact to Fe cation.

It belongs to the polypeptide deformylase family. The cofactor is Fe(2+).

It catalyses the reaction N-terminal N-formyl-L-methionyl-[peptide] + H2O = N-terminal L-methionyl-[peptide] + formate. Its function is as follows. Removes the formyl group from the N-terminal Met of newly synthesized proteins. Requires at least a dipeptide for an efficient rate of reaction. N-terminal L-methionine is a prerequisite for activity but the enzyme has broad specificity at other positions. The chain is Peptide deformylase from Lactococcus lactis subsp. lactis (strain IL1403) (Streptococcus lactis).